Reading from the N-terminus, the 434-residue chain is Indole diterpene prenyltransferase nodD2 (434 aa).

L-tryptophan contacts are provided by residues 85-86 (LI) and Glu-94. Arg-107, Lys-194, Arg-268, Lys-270, Tyr-272, Gln-351, Tyr-353, Tyr-418, and Tyr-422 together coordinate substrate.

Belongs to the tryptophan dimethylallyltransferase family.

It participates in secondary metabolite biosynthesis. Indole diterpene prenyltransferase; part of the gene cluster that mediates the biosynthesis of the indole diterpenes nodulisporic acids (NA). Nodulisporic acid A (NAA) and its chemically modified derivatives are of particular significance because of their highly potent insecticidal activity against blood-feeding arthropods and lack of observable adverse effects on mammals, in particular the tremogenicity associated with the paspaline-derived IDTs is not observed. The geranylgeranyl diphosphate (GGPP) synthase ggs1, localized outside of the cluster, is proposed to catalyze the first step in nodulisporic acid biosynthesis via conversion of farnesyl pyrophosphate and isopentyl pyrophosphate into geranylgeranyl pyrophosphate (GGPP). Condensation of indole-3-glycerol phosphate with GGPP by the prenyl transferase nodC then forms 3-geranylgeranylindole (3-GGI). Epoxidation by the FAD-dependent monooxygenase nodM leads to a single-epoxidized-GGI that is substrate of the terpene cyclase nodB for cyclization to yield emindole SB. The terminal methyl carbon, C28, of emindole SB is then oxidized by the cytochrome P450 monooxygenase nodW to produce nodulisporic acid F (NAF), the pentacyclic core of NAA. NAF is converted to nodulisporic acid E (NAE) via prenylation. This step is probably performed by one of the indole diterpene prenyltransferases nodD1 or nodD2. Several oxidation steps performed by the FAD-linked oxidoreductase nodO and one of the cytochrome P450 monooxygenase nodR, nodX or nodZ further convert NAE to nodulisporic acid D (NAD). NAD is substrate of cytochrome P450 monooxygenase nodJ to produce the precursor of nodulisporic acid C (NAC), converted to NAC by one of the indole diterpene prenyltransferases nodD1 or nodD2. The FAD-dependent monooxygenase nodY2 then oxidizes NAC to nodulisporic acid B (NAB). Finally NAB is converted to NAA by one of the cytochrome P450 monooxygenases nodR, nodX or nodZ. This chain is Indole diterpene prenyltransferase nodD2, found in Hypoxylon pulicicidum.